Reading from the N-terminus, the 644-residue chain is Exoribonuclease 2 (644 aa).

An RNB domain is found at 189–516 (REDLTALDFV…NHRLLKAVIK (328 aa)). The S1 motif domain maps to 561 to 643 (GTRFAAEIVD…ETRGIIARPV (83 aa)).

It belongs to the RNR ribonuclease family. RNase II subfamily.

It localises to the cytoplasm. The catalysed reaction is Exonucleolytic cleavage in the 3'- to 5'-direction to yield nucleoside 5'-phosphates.. Functionally, involved in mRNA degradation. Hydrolyzes single-stranded polyribonucleotides processively in the 3' to 5' direction. The protein is Exoribonuclease 2 of Shigella sonnei (strain Ss046).